The primary structure comprises 386 residues: MNIHEYQAKEILRKYGVPTSTGLVVTKTEKINETIDKLNTEVYVVKAQIHAGGRGKAGGVKVVKSKEEAKKVAHDMFGINLVTHQTGPQGQKVNRLYIESGCDILKEYYFSIVFDRLASCITFIASTEGGVDIEEVAEKTPEKIVKFSVDPATGLQDFHMRGIAYELGFKDNQAKQMKEIVKSVYNAFVETDAAQIEINPLIVQTDGNLLALDAKITFDDNGLFKHPNITAMRDHDEEDPLETRAANAGLSYVKMDGNIGCMVNGAGLAMATMDIIKLYGASPANFLDVGGGADRERVKEALKIILSDKEVQGILVNIFGGIMRCDIIAEGIIAAAKDIGIKVPLVVRLAGTNVEKGKEILSNSGLEIIPAHDLADAANKIVEAIR.

One can recognise an ATP-grasp domain in the interval 9–244; the sequence is KEILRKYGVP…HDEEDPLETR (236 aa). ATP is bound by residues lysine 46, 53–55, glutamate 99, cysteine 102, and glutamate 107; that span reads GRG. Mg(2+) is bound by residues asparagine 199 and aspartate 213. Substrate contacts are provided by residues asparagine 264 and 321 to 323; that span reads GIM.

Belongs to the succinate/malate CoA ligase beta subunit family. As to quaternary structure, heterotetramer of two alpha and two beta subunits. Mg(2+) serves as cofactor.

It carries out the reaction succinate + ATP + CoA = succinyl-CoA + ADP + phosphate. The catalysed reaction is GTP + succinate + CoA = succinyl-CoA + GDP + phosphate. The protein operates within carbohydrate metabolism; tricarboxylic acid cycle; succinate from succinyl-CoA (ligase route): step 1/1. Functionally, succinyl-CoA synthetase functions in the citric acid cycle (TCA), coupling the hydrolysis of succinyl-CoA to the synthesis of either ATP or GTP and thus represents the only step of substrate-level phosphorylation in the TCA. The beta subunit provides nucleotide specificity of the enzyme and binds the substrate succinate, while the binding sites for coenzyme A and phosphate are found in the alpha subunit. This chain is Succinate--CoA ligase [ADP-forming] subunit beta, found in Rickettsia felis (strain ATCC VR-1525 / URRWXCal2) (Rickettsia azadi).